The sequence spans 158 residues: Phosphopantetheine adenylyltransferase (158 aa).

Threonine 8 is a substrate binding site. ATP contacts are provided by residues 8-9 and histidine 16; that span reads TF. Substrate contacts are provided by lysine 40, leucine 72, and arginine 86. ATP is bound by residues 87 to 89, glutamate 97, and 122 to 128; these read GLR and HAFISSS.

It belongs to the bacterial CoaD family. Homohexamer. The cofactor is Mg(2+).

Its subcellular location is the cytoplasm. It carries out the reaction (R)-4'-phosphopantetheine + ATP + H(+) = 3'-dephospho-CoA + diphosphate. The protein operates within cofactor biosynthesis; coenzyme A biosynthesis; CoA from (R)-pantothenate: step 4/5. Its function is as follows. Reversibly transfers an adenylyl group from ATP to 4'-phosphopantetheine, yielding dephospho-CoA (dPCoA) and pyrophosphate. The protein is Phosphopantetheine adenylyltransferase of Campylobacter jejuni subsp. jejuni serotype O:6 (strain 81116 / NCTC 11828).